A 1616-amino-acid polypeptide reads, in one-letter code: Protein P200 (1616 aa).

Disordered stretches follow at residues 1 to 41, 878 to 909, 931 to 975, 1004 to 1083, 1100 to 1132, and 1159 to 1433; these read MPKT…DKVE, HFQPDVQPEQTPQEAKFDSPVEIPQESSQAEF, QQLE…LDQN, DNVE…EPVD, FDKNQTQTEGLEEPQVSSEAEVVDQTTTDTVGE, and ISEP…SEEE. The interval 891 to 1389 is 2 X 26 AA repeats; that stretch reads EAKFDSPVEI…QEAKFDSPVE (499 aa). Positions 938–952 are enriched in low complexity; sequence EETVVTPTEVTAFEP. 2 stretches are compositionally biased toward basic and acidic residues: residues 1012 to 1029 and 1059 to 1081; these read QPKETEAEITFDETKELQ and VFEKPQLETQTEKILEEEPKSEP. 2 tandem repeats follow at residues 1161–1186 and 1205–1236. 2 stretches are compositionally biased toward polar residues: residues 1200-1227 and 1242-1251; these read VQTQPEIQPVESQPEATFDTVQPEQTPQ and EFSSEPTQQH. A 2 X 32 AA repeats region spans residues 1205–1389; that stretch reads EIQPVESQPE…QEAKFDSPVE (185 aa). Residues 1256–1270 show a composition bias toward acidic residues; the sequence is ASFDEPNYDFDEPNY. Residues 1276-1285 are compositionally biased toward polar residues; it reads SYDSDLQPSE. Over residues 1288 to 1302 the composition is skewed to acidic residues; it reads YDVDEPNYDFDEPNY. Residues 1309–1323 show a composition bias toward low complexity; that stretch reads SEPQFEPQVEQQPGE. 2 consecutive repeat copies span residues 1310-1339 and 1358-1389. The span at 1353-1380 shows a compositional bias: polar residues; that stretch reads VQTQPEIQPVESQPEATFDTVQPEQTPQ. A compositionally biased stretch (low complexity) spans 1392-1406; it reads QEPQVSSEPEVVVQP. Acidic residues predominate over residues 1416–1433; the sequence is VLEEPQADEIQPEASEEE.

Functionally, could be an accessory structural component in cytadherence. The protein is Protein P200 of Mycoplasma genitalium (strain ATCC 33530 / DSM 19775 / NCTC 10195 / G37) (Mycoplasmoides genitalium).